The following is a 608-amino-acid chain: Elongation factor 4 (608 aa).

The tr-type G domain occupies 11–193; sequence KKIRNFSIIA…QIVEKVPEPS (183 aa). GTP-binding positions include 23–28 and 140–143; these read DHGKST and NKID.

It belongs to the TRAFAC class translation factor GTPase superfamily. Classic translation factor GTPase family. LepA subfamily.

It localises to the cell membrane. It catalyses the reaction GTP + H2O = GDP + phosphate + H(+). Its function is as follows. Required for accurate and efficient protein synthesis under certain stress conditions. May act as a fidelity factor of the translation reaction, by catalyzing a one-codon backward translocation of tRNAs on improperly translocated ribosomes. Back-translocation proceeds from a post-translocation (POST) complex to a pre-translocation (PRE) complex, thus giving elongation factor G a second chance to translocate the tRNAs correctly. Binds to ribosomes in a GTP-dependent manner. The chain is Elongation factor 4 from Listeria innocua serovar 6a (strain ATCC BAA-680 / CLIP 11262).